Here is a 469-residue protein sequence, read N- to C-terminus: Serine hydroxymethyltransferase, cytosolic (469 aa).

Thr20 carries the phosphothreonine modification. Ser26 is modified (phosphoserine). Lys248 bears the N6-(pyridoxal phosphate)lysine mark. Ser429 carries the post-translational modification Phosphoserine. Residue Lys456 forms a Glycyl lysine isopeptide (Lys-Gly) (interchain with G-Cter in ubiquitin) linkage.

The protein belongs to the SHMT family. Homotetramer. Pyridoxal 5'-phosphate is required as a cofactor.

Its subcellular location is the cytoplasm. It carries out the reaction (6R)-5,10-methylene-5,6,7,8-tetrahydrofolate + glycine + H2O = (6S)-5,6,7,8-tetrahydrofolate + L-serine. It participates in one-carbon metabolism; tetrahydrofolate interconversion. Functionally, interconversion of serine and glycine. This chain is Serine hydroxymethyltransferase, cytosolic, found in Saccharomyces cerevisiae (strain ATCC 204508 / S288c) (Baker's yeast).